The sequence spans 460 residues: tRNA(Ile)-lysidine synthase (460 aa).

30-35 (SGGLDS) is a binding site for ATP.

Belongs to the tRNA(Ile)-lysidine synthase family.

The protein localises to the cytoplasm. It catalyses the reaction cytidine(34) in tRNA(Ile2) + L-lysine + ATP = lysidine(34) in tRNA(Ile2) + AMP + diphosphate + H(+). Its function is as follows. Ligates lysine onto the cytidine present at position 34 of the AUA codon-specific tRNA(Ile) that contains the anticodon CAU, in an ATP-dependent manner. Cytidine is converted to lysidine, thus changing the amino acid specificity of the tRNA from methionine to isoleucine. This is tRNA(Ile)-lysidine synthase from Yersinia pseudotuberculosis serotype I (strain IP32953).